The primary structure comprises 191 residues: MRLIIMGPPGAGKGTQAKYIAEHFKIPAISTGDIFRANVTEGTPLGVEAKRYMDAGEYVPDEVTNRMVRNRIDEPDAVGGFLLDGYPRTVAQVEELDGMIRFTGHRLDAVVCLTVDQDEIVGRLLQRAQVEGRADDTEDVIRRRQDLYLEQTAPLIEIYKQRDLVHEVDGIGEVDEVTARIFQALDVIPES.

10-15 (GAGKGT) contributes to the ATP binding site. An NMP region spans residues 30–59 (STGDIFRANVTEGTPLGVEAKRYMDAGEYV). Residues T31, R36, 57 to 59 (EYV), 85 to 88 (GYPR), and Q92 each bind AMP. The segment at 126–136 (QRAQVEGRADD) is LID. Position 127 (R127) interacts with ATP. AMP-binding residues include R133 and R144. Residue G172 participates in ATP binding.

The protein belongs to the adenylate kinase family. As to quaternary structure, monomer.

The protein resides in the cytoplasm. It catalyses the reaction AMP + ATP = 2 ADP. Its pathway is purine metabolism; AMP biosynthesis via salvage pathway; AMP from ADP: step 1/1. Functionally, catalyzes the reversible transfer of the terminal phosphate group between ATP and AMP. Plays an important role in cellular energy homeostasis and in adenine nucleotide metabolism. This chain is Adenylate kinase, found in Nocardioides sp. (strain ATCC BAA-499 / JS614).